The primary structure comprises 584 residues: Acetylcholinesterase (584 aa).

A1 is a signal peptide. C70 and C97 are oxidised to a cystine. Residue S204 is the Acyl-ester intermediate of the active site. The cysteines at positions 258 and 273 are disulfide-linked. N-linked (GlcNAc...) asparagine glycosylation is present at N266. E335 serves as the catalytic Charge relay system. A glycan (N-linked (GlcNAc...) asparagine) is linked at N351. The cysteines at positions 410 and 530 are disulfide-linked. H448 serves as the catalytic Charge relay system. An N-linked (GlcNAc...) asparagine glycan is attached at N465.

This sequence belongs to the type-B carboxylesterase/lipase family. As to quaternary structure, homotetramer; composed of disulfide-linked homodimers. Interacts with PRIMA1. The interaction with PRIMA1 is required to anchor it to the basal lamina of cells and organize into tetramers.

Its subcellular location is the synapse. It is found in the secreted. The protein localises to the cell membrane. It carries out the reaction acetylcholine + H2O = choline + acetate + H(+). Terminates signal transduction at the neuromuscular junction by rapid hydrolysis of the acetylcholine released into the synaptic cleft. This Oryctolagus cuniculus (Rabbit) protein is Acetylcholinesterase (ACHE).